Here is a 73-residue protein sequence, read N- to C-terminus: N-terminal-borealin-like protein (73 aa).

The protein belongs to the borealin family. Component of the aurora kinase complex composed of at least BIR1, BNL1, IPL1 and SLI15.

The protein resides in the nucleus. It localises to the cytoplasm. It is found in the cytoskeleton. Its subcellular location is the spindle. Component of the aurora kinase complex, also called chromosomal passenger complex (CPC), essential for chromosome segregation and metaphase chromosome alignment. Mediates the SLI15-BIR1 interaction within the CPC. The chain is N-terminal-borealin-like protein (NBL1) from Saccharomyces cerevisiae (strain ATCC 204508 / S288c) (Baker's yeast).